Reading from the N-terminus, the 595-residue chain is Polyadenylate-binding protein-interacting protein 4 (595 aa).

The region spanning 48–113 (RLVYFTTCKI…SRSEFVRKPP (66 aa)) is the Sm domain. 2 stretches are compositionally biased toward polar residues: residues 302–313 (GGSSTSDGQKPA) and 326–346 (GDSQSSRKNKNVDQSCSTSKQ). 2 disordered regions span residues 302-505 (GGSS…FYYP) and 536-595 (MYHP…KGRE). Positions 364–382 (DEQRRKNNEEVSHNNRSAE) are enriched in basic and acidic residues. Low complexity predominate over residues 416-465 (SQVSSKTKSESSFGQSASRSSESRPGPSTSSRPGLSPSSSIGSMASSEKS). The PAM2-like 1; degenerate motif lies at 466 to 474 (TLNPNAKEF). The short motif at 475–485 (KLNPKAKSFKP) is the PAM2-like 2 element. Composition is skewed to low complexity over residues 488-501 (SAAAPPQSPIADAS) and 548-570 (QPQYPQQQMIPGQQQQQMIPGQQ).

Expressed in cauline leaves, stems, rosette leaves, immature siliques and primary inflorescences.

The protein is Polyadenylate-binding protein-interacting protein 4 (CID4) of Arabidopsis thaliana (Mouse-ear cress).